We begin with the raw amino-acid sequence, 470 residues long: 1-aminocyclopropane-1-carboxylate synthase 9 (470 aa).

Residues Glu-47 and Tyr-85 each coordinate substrate. Lys-272 bears the N6-(pyridoxal phosphate)lysine mark.

Belongs to the class-I pyridoxal-phosphate-dependent aminotransferase family. Homodimer and heterodimer. In vivo, the relevance of heterodimerization with other ACS enzymes is however unsure. Interacts (via its C-terminal region) with FEI1, FEI2, ETO1 and EOL1. Pyridoxal 5'-phosphate is required as a cofactor. May be processed at its C-terminus. In terms of tissue distribution, expressed in roots and siliques.

The catalysed reaction is S-adenosyl-L-methionine = 1-aminocyclopropane-1-carboxylate + S-methyl-5'-thioadenosine + H(+). The protein operates within alkene biosynthesis; ethylene biosynthesis via S-adenosyl-L-methionine; ethylene from S-adenosyl-L-methionine: step 1/2. In terms of biological role, 1-aminocyclopropane-1-carboxylate synthase (ACS) enzymes catalyze the conversion of S-adenosyl-L-methionine (SAM) into 1-aminocyclopropane-1-carboxylate (ACC), a direct precursor of ethylene. The sequence is that of 1-aminocyclopropane-1-carboxylate synthase 9 (ACS9) from Arabidopsis thaliana (Mouse-ear cress).